Consider the following 424-residue polypeptide: Glutamyl-tRNA reductase (424 aa).

Residues Thr51–Arg54, Ser99, Glu104–Gln106, and Gln110 contribute to the substrate site. Residue Cys52 is the Nucleophile of the active site. Gly179 to Gly184 contacts NADP(+).

This sequence belongs to the glutamyl-tRNA reductase family. As to quaternary structure, homodimer.

It carries out the reaction (S)-4-amino-5-oxopentanoate + tRNA(Glu) + NADP(+) = L-glutamyl-tRNA(Glu) + NADPH + H(+). It functions in the pathway porphyrin-containing compound metabolism; protoporphyrin-IX biosynthesis; 5-aminolevulinate from L-glutamyl-tRNA(Glu): step 1/2. Catalyzes the NADPH-dependent reduction of glutamyl-tRNA(Glu) to glutamate 1-semialdehyde (GSA). The sequence is that of Glutamyl-tRNA reductase from Methanocorpusculum labreanum (strain ATCC 43576 / DSM 4855 / Z).